Reading from the N-terminus, the 120-residue chain is Small ribosomal subunit protein uS13 (120 aa).

A disordered region spans residues 96–120 (PCRGQRTRTNARTRKGPRKAIAGKK).

The protein belongs to the universal ribosomal protein uS13 family. Part of the 30S ribosomal subunit. Forms a loose heterodimer with protein S19. Forms two bridges to the 50S subunit in the 70S ribosome.

Functionally, located at the top of the head of the 30S subunit, it contacts several helices of the 16S rRNA. In the 70S ribosome it contacts the 23S rRNA (bridge B1a) and protein L5 of the 50S subunit (bridge B1b), connecting the 2 subunits; these bridges are implicated in subunit movement. Contacts the tRNAs in the A and P-sites. The protein is Small ribosomal subunit protein uS13 of Dechloromonas aromatica (strain RCB).